Reading from the N-terminus, the 177-residue chain is Bifunctional protein PyrR (177 aa).

A PRPP-binding motif is present at residues 99 to 111 (VVLVDDVLYTGRT).

This sequence belongs to the purine/pyrimidine phosphoribosyltransferase family. PyrR subfamily. Homodimer and homohexamer; in equilibrium.

It carries out the reaction UMP + diphosphate = 5-phospho-alpha-D-ribose 1-diphosphate + uracil. Its function is as follows. Regulates transcriptional attenuation of the pyrimidine nucleotide (pyr) operon by binding in a uridine-dependent manner to specific sites on pyr mRNA. This disrupts an antiterminator hairpin in the RNA and favors formation of a downstream transcription terminator, leading to a reduced expression of downstream genes. Also displays a weak uracil phosphoribosyltransferase activity which is not physiologically significant. This chain is Bifunctional protein PyrR, found in Clostridioides difficile (strain 630) (Peptoclostridium difficile).